Here is a 263-residue protein sequence, read N- to C-terminus: Probable endonuclease lcl3 (263 aa).

Positions M1–S21 are disordered. Residues S8–R19 show a composition bias toward basic and acidic residues. The chain crosses the membrane as a helical span at residues T41–Y59. In terms of domain architecture, TNase-like spans R80–G240. R131 is an active-site residue. D136 serves as a coordination point for Ca(2+). Active-site residues include E139 and R179. The interval G236 to K263 is disordered. Residues K241–T253 are compositionally biased toward basic and acidic residues.

The protein belongs to the LCL3 family.

The protein localises to the mitochondrion. It localises to the membrane. This Botryotinia fuckeliana (strain B05.10) (Noble rot fungus) protein is Probable endonuclease lcl3 (lcl3).